The sequence spans 241 residues: Acetoacetyl-CoA reductase (241 aa).

Residues 12 to 14 (RGI), arginine 39, and 82 to 86 (NAGIT) each bind NADP(+). Substrate contacts are provided by residues aspartate 88 and 141–144 (QMGQ). Tyrosine 147 acts as the Proton acceptor in catalysis. 177 to 180 (PGYI) is an NADP(+) binding site. 178-179 (GY) contacts substrate.

This sequence belongs to the short-chain dehydrogenases/reductases (SDR) family.

It is found in the cytoplasm. It catalyses the reaction a (3R)-3-hydroxyacyl-CoA + NADP(+) = a 3-oxoacyl-CoA + NADPH + H(+). It functions in the pathway biopolymer metabolism; poly-(R)-3-hydroxybutanoate biosynthesis. This is Acetoacetyl-CoA reductase from Rhizobium meliloti (strain 1021) (Ensifer meliloti).